Consider the following 193-residue polypeptide: uncharacterized protein (193 aa).

This is an uncharacterized protein from Aquifex aeolicus (strain VF5).